Reading from the N-terminus, the 587-residue chain is Aspartate--tRNA ligase (587 aa).

Glu175 is a binding site for L-aspartate. The interval 199-202 (QQFK) is aspartate. Residues Arg221 and His446 each contribute to the L-aspartate site. 221-223 (RDE) contributes to the ATP binding site. Glu480 provides a ligand contact to ATP. Arg487 is a binding site for L-aspartate. An ATP-binding site is contributed by 532–535 (GVDR).

This sequence belongs to the class-II aminoacyl-tRNA synthetase family. Type 1 subfamily. In terms of assembly, homodimer.

The protein resides in the cytoplasm. It catalyses the reaction tRNA(Asp) + L-aspartate + ATP = L-aspartyl-tRNA(Asp) + AMP + diphosphate. Functionally, catalyzes the attachment of L-aspartate to tRNA(Asp) in a two-step reaction: L-aspartate is first activated by ATP to form Asp-AMP and then transferred to the acceptor end of tRNA(Asp). This chain is Aspartate--tRNA ligase, found in Streptomyces coelicolor (strain ATCC BAA-471 / A3(2) / M145).